The following is a 579-amino-acid chain: Glutamine--tRNA ligase (579 aa).

The 'HIGH' region signature appears at 41-51 (PEPNGYLHIGH). ATP-binding positions include 42-44 (EPN) and 48-54 (HIGHAKA). 2 residues coordinate L-glutamine: Asp74 and Tyr218. ATP-binding positions include Thr237, 285–286 (RL), and 293–295 (MSK). The 'KMSKS' region signature appears at 292–296 (VMSKR).

Belongs to the class-I aminoacyl-tRNA synthetase family. In terms of assembly, monomer.

It is found in the cytoplasm. The enzyme catalyses tRNA(Gln) + L-glutamine + ATP = L-glutaminyl-tRNA(Gln) + AMP + diphosphate. In Xanthomonas oryzae pv. oryzae (strain MAFF 311018), this protein is Glutamine--tRNA ligase.